We begin with the raw amino-acid sequence, 509 residues long: Cytochrome P450 monooxygenase fumoA (509 aa).

The chain crosses the membrane as a helical span at residues Leu5–Phe27. 3 N-linked (GlcNAc...) asparagine glycosylation sites follow: Asn317, Asn369, and Asn378. Position 456 (Cys456) interacts with heme. A glycan (N-linked (GlcNAc...) asparagine) is linked at Asn464.

Belongs to the cytochrome P450 family. Requires heme as cofactor.

The protein resides in the membrane. It functions in the pathway secondary metabolite biosynthesis. Cytochrome P450 monooxygenase; part of the gene cluster that mediates the biosynthesis of fumosorinone, a 2-pyridone alkaloid that acts as an inhibitor of protein tyrosine phosphatase 1B which is implicated asa negative regulator of insulin receptor signaling and a potential drug target for the treatment of type II diabetes and other associated metabolic syndromes. The polyketide-amino acid backbone of fumosorinone is first assembled by the PKS-NRPS hybrid fumoS. The PKS modules condense one acetyl-CoA starter unit with 7 malonyl-CoA units, programmed C-methylations occurring after the first 3 and the sixth extensions, and cycles of full reduction occurring after the first 2 extensions. Because fumoS lacks a designated enoyl reductase (ER) domain, the required activity is provided the enoyl reductase fumoC. Upon formation of the polyketide backbone on the thiotemplate, the polyketide is transferred to the NRPS module and linked to tyrosine to produce the acyltetramic acid intermediate called prefumosorinone A. The cytochrome P450 monooxygenase fumoA then probably catalyzes an unprecedented oxidative ring expansion of prefumosorinone A to form prefumosorinone B which contains the 2-pyridone core of fumosorinone. The cytochrome P450 monooxygenase fumoB might hydroxylate the nitrogen of prefumosorinone B, but not the acyltetramic acid prefumosorinone A, to form fumosorinone. In Cordyceps fumosorosea (strain ARSEF 2679) (Isaria fumosorosea), this protein is Cytochrome P450 monooxygenase fumoA.